Here is a 311-residue protein sequence, read N- to C-terminus: Heme A synthase (311 aa).

Residues 1–6 (MQRFIK) are Cytoplasmic-facing. Residues 7–27 (WLAVITSLDLLIVLLGGALVT) form a helical membrane-spanning segment. Residues 28–62 (KTGSGQGCGKSWPLCNGEFVPSNLSMETIIELSHR) lie on the Extracellular side of the membrane. Cys35 and Cys42 are oxidised to a cystine. Glu58 is an active-site residue. His61 provides a ligand contact to heme o. Residues 63–83 (LTSGSAGILVTLLCILSWKYY) form a helical membrane-spanning segment. Topologically, residues 84–91 (KHVRETKT) are cytoplasmic. Residues 92-112 (LAILSFVFLVAQALMGAAAVV) form a helical membrane-spanning segment. Over 113 to 121 (WGQMPAVLA) the chain is Extracellular. Residues 122–142 (IHFGISLISFASVILLTCLIF) form a helical membrane-spanning segment. His123 serves as a coordination point for heme o. At 143–159 (EIDQKFDARSLIMDKKM) the chain is on the cytoplasmic side. A helical membrane pass occupies residues 160–180 (KFHIYGVTIYSYIVVYTGALV). The Extracellular segment spans residues 181–211 (RHERASLACPDFPLCSKNRPMPTQLHEWVQM). Cysteines 189 and 195 form a disulfide. The helical transmembrane segment at 212 to 232 (GHRVAAMLIFAWILYAMILAI) threads the bilayer. His213 is a heme b binding site. Topologically, residues 233 to 243 (RHYKQQPVVYW) are cytoplasmic. The chain crosses the membrane as a helical span at residues 244–264 (GWIISFILVTLQAIVGILVVF). The Extracellular segment spans residues 265–271 (TNASLSM). Residues 272–292 (ALLHSLFISCLFAVLCYLVML) traverse the membrane as a helical segment. Heme b is bound at residue His275. The Cytoplasmic portion of the chain corresponds to 293–311 (GTRSKVNAKEAASTSKQTK).

The protein belongs to the COX15/CtaA family. Type 1 subfamily. Interacts with CtaB. The cofactor is heme b.

The protein resides in the cell membrane. The catalysed reaction is Fe(II)-heme o + 2 A + H2O = Fe(II)-heme a + 2 AH2. The protein operates within porphyrin-containing compound metabolism; heme A biosynthesis; heme A from heme O: step 1/1. In terms of biological role, catalyzes the conversion of heme O to heme A by two successive hydroxylations of the methyl group at C8. The first hydroxylation forms heme I, the second hydroxylation results in an unstable dihydroxymethyl group, which spontaneously dehydrates, resulting in the formyl group of heme A. This chain is Heme A synthase, found in Bacillus cereus (strain ATCC 10987 / NRS 248).